Reading from the N-terminus, the 170-residue chain is Adenine phosphoribosyltransferase (170 aa).

This sequence belongs to the purine/pyrimidine phosphoribosyltransferase family. Homodimer.

The protein localises to the cytoplasm. The catalysed reaction is AMP + diphosphate = 5-phospho-alpha-D-ribose 1-diphosphate + adenine. It functions in the pathway purine metabolism; AMP biosynthesis via salvage pathway; AMP from adenine: step 1/1. Catalyzes a salvage reaction resulting in the formation of AMP, that is energically less costly than de novo synthesis. The polypeptide is Adenine phosphoribosyltransferase (Flavobacterium johnsoniae (strain ATCC 17061 / DSM 2064 / JCM 8514 / BCRC 14874 / CCUG 350202 / NBRC 14942 / NCIMB 11054 / UW101) (Cytophaga johnsonae)).